The sequence spans 350 residues: Deoxyribonuclease-2-alpha (350 aa).

A signal peptide spans 1–19; sequence MAAPSSLLLAALLWVPAEA. Residues Cys-22 and Cys-162 are joined by a disulfide bond. N-linked (GlcNAc...) asparagine glycosylation is found at Asn-89, Asn-215, Asn-269, and Asn-293. Intrachain disulfides connect Cys-270-Cys-350 and Cys-311-Cys-330. His-298 is an active-site residue.

The protein belongs to the DNase II family. In terms of tissue distribution, ubiquitous.

The protein resides in the lysosome. It carries out the reaction Endonucleolytic cleavage to nucleoside 3'-phosphates and 3'-phosphooligonucleotide end-products.. Hydrolyzes DNA under acidic conditions with a preference for double-stranded DNA. Plays a major role in the clearance of nucleic acids generated through apoptosis, hence preventing autoinflammation. Necessary for proper fetal development and for definitive erythropoiesis in fetal liver and bone marrow, where it degrades nuclear DNA expelled from erythroid precursor cells. The polypeptide is Deoxyribonuclease-2-alpha (Dnase2) (Rattus norvegicus (Rat)).